Here is a 589-residue protein sequence, read N- to C-terminus: Serine/threonine-protein phosphatase 2A 65 kDa regulatory subunit A alpha isoform (589 aa).

Alanine 2 bears the N-acetylalanine mark. HEAT repeat units lie at residues 8–46 (DSLY…GVER), 47–84 (TRSE…GGPE), 85–123 (YVHC…SPSD), 124–161 (LEAH…VSSA), 162–200 (VKAE…ELDN), 201–239 (VKSE…PQED), 240–278 (LEAL…GPEI), 279–321 (TKTD…RENV), 322–360 (IMTQ…GKDN), 361–399 (TIEH…GIRQ), 400–438 (LSQS…GVEF), 439–477 (FDEK…GKEW), 478–516 (AHAT…GQDI), 517–555 (TTKH…DNST), and 556–589 (LQSE…LSLA). Position 280 is an N6-acetyllysine (lysine 280).

The protein belongs to the phosphatase 2A regulatory subunit A family. PP2A consists of a common heterodimeric core enzyme, composed of PPP2CA a 36 kDa catalytic subunit (subunit C) and PPP2R1A a 65 kDa constant regulatory subunit (PR65 or subunit A), that associates with a variety of regulatory subunits. Proteins that associate with the core dimer include three families of regulatory subunits B (the R2/B/PR55/B55, R3/B''/PR72/PR130/PR59 and R5/B'/B56 families), the 48 kDa variable regulatory subunit, viral proteins, and cell signaling molecules. Found in a complex with at least ARL2, PPP2CB, PPP2R1A, PPP2R2A, PPP2R5E and TBCD. Interacts with the PP2A C catalytic subunit PPP2CA. Interacts with the PP2A B subunit PPP2R2A. Interacts with the PP2A B subunit PPP2R5D. Interacts with FOXO1; the interaction dephosphorylates FOXO1 on AKT-mediated phosphorylation sites. Interacts with IPO9. Interacts with TP53 and SGO1. Interacts with PLA2G16; this interaction might decrease PP2A activity. Interacts with CTTNBP2NL. Interacts with GNA12; the interaction promotes protein phosphatase 2A activation causing dephosphorylation of MAPT. Interacts with CIP2A; this interaction stabilizes CIP2A. Interacts with PABIR1/FAM122A. Interacts with ADCY8; antagonizes interaction between ADCY8 and calmodulin. Interacts with CRTC3 (when phosphorylated at 'Ser-391'). Interacts with SPRY2. Part of the core of STRIPAK complexes composed of PP2A catalytic and scaffolding subunits, the striatins (PP2A regulatory subunits), the striatin-associated proteins MOB4, STRIP1 and STRIP2, PDCD10 and members of the STE20 kinases, such as STK24 and STK26. Component of the Integrator-PP2A (INTAC) complex, composed of the Integrator core complex and protein phosphatase 2A subunits PPP2CA and PPP2R1A.

Its subcellular location is the cytoplasm. It is found in the nucleus. The protein localises to the chromosome. It localises to the centromere. The protein resides in the lateral cell membrane. Its subcellular location is the cell projection. It is found in the dendrite. In terms of biological role, the PR65 subunit of protein phosphatase 2A serves as a scaffolding molecule to coordinate the assembly of the catalytic subunit and a variable regulatory B subunit. Upon interaction with GNA12 promotes dephosphorylation of microtubule associated protein TAU/MAPT. Required for proper chromosome segregation and for centromeric localization of SGO1 in mitosis. Together with RACK1 adapter, mediates dephosphorylation of AKT1 at 'Ser-473', preventing AKT1 activation and AKT-mTOR signaling pathway. Dephosphorylation of AKT1 is essential for regulatory T-cells (Treg) homeostasis and stability. Part of the striatin-interacting phosphatase and kinase (STRIPAK) complexes. STRIPAK complexes have critical roles in protein (de)phosphorylation and are regulators of multiple signaling pathways including Hippo, MAPK, nuclear receptor and cytoskeleton remodeling. Different types of STRIPAK complexes are involved in a variety of biological processes such as cell growth, differentiation, apoptosis, metabolism and immune regulation. Key mediator of a quality checkpoint during transcription elongation as part of the Integrator-PP2A (INTAC) complex. The INTAC complex drives premature transcription termination of transcripts that are unfavorably configured for transcriptional elongation: within the INTAC complex, acts as a scaffolding subunit for PPP2CA, which catalyzes dephosphorylation of the C-terminal domain (CTD) of Pol II subunit POLR2A/RPB1 and SUPT5H/SPT5, thereby preventing transcriptional elongation. Regulates the recruitment of the SKA complex to kinetochores. This Mus musculus (Mouse) protein is Serine/threonine-protein phosphatase 2A 65 kDa regulatory subunit A alpha isoform (Ppp2r1a).